We begin with the raw amino-acid sequence, 773 residues long: DNA gyrase subunit B (773 aa).

In terms of domain architecture, Toprim spans 416–530 (SEIFLVEGDS…QGHVFIAQAP (115 aa)). Glutamate 422, aspartate 495, and aspartate 497 together coordinate Mg(2+).

It belongs to the type II topoisomerase GyrB family. As to quaternary structure, heterotetramer, composed of two GyrA and two GyrB chains. In the heterotetramer, GyrA contains the active site tyrosine that forms a transient covalent intermediate with DNA, while GyrB binds cofactors and catalyzes ATP hydrolysis. It depends on Mg(2+) as a cofactor. Mn(2+) serves as cofactor. Requires Ca(2+) as cofactor.

The protein resides in the cytoplasm. The enzyme catalyses ATP-dependent breakage, passage and rejoining of double-stranded DNA.. A type II topoisomerase that negatively supercoils closed circular double-stranded (ds) DNA in an ATP-dependent manner to modulate DNA topology and maintain chromosomes in an underwound state. Negative supercoiling favors strand separation, and DNA replication, transcription, recombination and repair, all of which involve strand separation. Also able to catalyze the interconversion of other topological isomers of dsDNA rings, including catenanes and knotted rings. Type II topoisomerases break and join 2 DNA strands simultaneously in an ATP-dependent manner. The polypeptide is DNA gyrase subunit B (Helicobacter pylori (strain J99 / ATCC 700824) (Campylobacter pylori J99)).